A 501-amino-acid chain; its full sequence is TNF receptor-associated factor 2 (501 aa).

Residue Ala-2 is modified to N-acetylalanine. Ser-5 is modified (phosphoserine). Thr-7 is modified (phosphothreonine). Ser-11 is modified (phosphoserine). A Phosphothreonine modification is found at Thr-22. Lys-31 is covalently cross-linked (Glycyl lysine isopeptide (Lys-Gly) (interchain with G-Cter in ubiquitin)). The RING-type zinc finger occupies 34 to 73 (CSACKNILRRPFQAQCGHRYCSFCLTSILSSGPQNCAACV). Thr-117 is modified (phosphothreonine; by PKC). TRAF-type zinc fingers lie at residues 124-180 (CHEG…VHYE) and 177-233 (VHYE…ENLQ). An important for interaction with BIRC2 and BIRC3 region spans residues 283 to 293 (ENIVCVLNREV). Positions 298-348 (VTAEACSRQHRLDQDKIEALSNKVQQLERSIGLKDLAMADLEQKVSELEVS) form a coiled coil. Lys-320 participates in a covalent cross-link: Glycyl lysine isopeptide (Lys-Gly) (interchain with G-Cter in ubiquitin). An MATH domain is found at 351-496 (DGVFIWKISD…DDAIFIKAIV (146 aa)).

The protein belongs to the TNF receptor-associated factor family. A subfamily. In terms of assembly, homotrimer. Heterotrimer with TRAF1. Heterotrimer with TRAF3 (via TRAF domain). The domain containing the RING-type and the first TRAF-type zinc finger can also form homodimers (in vitro). Interacts with TNFRSF1B/TNFR2. Interacts with TNFRSF5/CD40. Interacts with TNFRSF4, TNFRSF7/CD27, TNFRSF8/CD30, TNFRSF9/CD137, TNFRSF11A/RANK, TNFRSF13B/TACI, TNFRSF14, TNFRSF16/NGFR, TNFRSF17/BCMA, TNFRSF18/AITR, TNFRSF19/TROY, TNFRSF19L/RELT and EDAR. Stimulation of TNF-alpha receptor TNFRSF1A leads to the formation of two distinct signaling complexes. Plasma membrane-bound complex I is composed of TNFRSF1A, TRADD, RIPK1, TRAF2 and BIRC2/c-IAP1 or BIRC3 which interacts with CHUCK/IKK-alpha, IKBKB/IKK-beta and IKBKG/IKK-gamma promoting cell survival. Subsequently, TRADD, RIPK1 and TRAF2 dissociate from TNFRSF1A and form cytoplasmic complex II with FADD and caspase CASP8 promoting cell apoptosis. Interacts with TRADD. Identified in a complex with TNFRSF1A, RIPK1 and IKBKB/IKK-beta. Interacts with RIPK2. Interacts with BIRC2 and BIRC3 N-terminus; a single BIRC2 or BIRC3 molecule interacts with a heterotrimer formed by TRAF1 and TRAF2, or a TRAF2 homotrimer. Identified in a complex composed of TRAF2, TRAF3, BIRC2 and BIRC3. Interacts with BIRC2; the interaction promotes BIRC2 stability. Interaction with BIRC2 and/or BIRC3 is essential for ubiquitination of IKBKE, degradation of NFKBIA and activation of NF-kappa-B. Within complex I, phosphorylated TRAF2 interacts (via 'Lys-63'-linked polyubiquitin chains) with CHUCK/IKK-alpha, IKBKB/IKK-beta, IKBKG/IKK-gamma TAB2, TAB3 and TAK1 in response to TNF-alpha stimulation. Within complex I, interacts with UXT isoform 1 (via TPQE motif); the interaction prevents the recruitment of FADD and CASP8/caspase 8 to complex I. Forms a complex composed of TNFRSF8/CD30 or TNFRSF1B/TNFR2, and TRAF1, TRAF2 and E3 ligase TRAIP. Within the complex, interacts with TRAIP; the interaction inhibits TRAF2-mediated NF-kappa B activation. Component of a complex composed of TANK and TBK1. Interacts with TRPC4AP. Interacts with MAP3K1/MEKK1, MAP3K5/ASK1 and MAP3K11/MLK3 in response to TNF-alpha stimulation; the interaction leads to JNK activation and interaction with MAP3K5 is inhibited by PRMT1. Component of a complex composed of MAP3K14/NIK BIRC3 and TRAF3; the interaction leads to BIRC2/3-mediated ubiquitination of TRAF3 upon CD40 engagement in a TRAF2-dependent manner. Interacts with MAP3K14/NIK in response to TNF-alpha stimulation; the interaction leads to NF-kappa B activation. Interacts with PEG3; the interaction may promote TRAF2-mediated NF-kappa B activation. Interacts with HIVEP3; the interaction may inhibit TNF-alpha-TRAF2-mediated NF-kappa B and JNK activation. Interacts with TANK/ITRAF; the interaction prevents interaction between TNFRSF1B/TNFR2 and TRAF2. Interacts with deubiquitinating enzyme CYLD; the interaction results in the deubiquitination and inactivation of TRAF2. Interacts with SIAH2; the interaction leads to TRAF2 ubiquitination and degradation. Interacts with E2 conjugating enzyme UBE2N/Ubc13, E3 ligase ITCH and RNF11 in response to TNF-alpha stimulation. Interacts with ubiquitin-editing enzyme TNFAIP3/A20 in response to TNF-alpha stimulation; the interaction promotes TRAF2 dissociation from UBE2N/Ubc13, ITCH, RNF11 and TAX1BP1 and prevents prolonged TRAF-2 ubiquitination. Interacts with TAX1BP1 in response to TNF-alpha stimulation; the interaction promotes TRAF2 dissociation from UBE2N/Ubc13 and TNFAIP3/A20, and prevents prolonged TRAF-2 ubiquitination. Interacts (via C-terminus) with EIF2AK2/PKR (via the kinase catalytic domain). Interacts with deubiquitinating enzyme USP48. Interacts with PTPN2; probably involved in TNF-mediated signaling. Interacts with Toll-like receptor TLR4/3 adapter TICAM1/TRIF; the interaction may promote TICAM1 ubiquitination. Interacts with kinase/endoribonuclease ERN1/IRE1 and DAB2IP in response to ER stress; the interaction requires DAB2IP. Interacts with ERN1/IRE1 and TAOK3 in response to ER stress; the interaction may promote TRAF2 phosphorylation. Interacts (via zinc fingers) with DAB2IP (via C-terminus PER domain) in response to TNF-alpha stimulation. Interacts with CASP8AP2/FLASH. Interacts with NFATC2IP; the interaction may repress IL-4 production in T cells. Interacts with kinase CDK9. Interacts with sphingosine kinase 1 SPHK1. Interacts with kinase TNIK. Interacts with TRAFD1. Interacts with DNA phosphodiesterase TDP2. Interacts with MAVS/IPS1. Interacts with CARD14. Interacts with GPS2. Interacts with XPNPEP3. Interacts with RIPK3. Interacts with RELL2. Interacts with LRRC19. Interacts with GAPDH; promoting TRAF2 ubiquitination. In terms of processing, phosphorylated at several serine residues within the first 128 amino acid residues. Phosphorylated at Thr-117 in response to signaling via TNF and TNFRSF1A. Phosphorylation at Thr-117 is required for 'Lys-63'-linked polyubiquitination, but not for 'Lys-48'-linked polyubiquitination. Phosphorylation at Thr-117 is important for interaction with IKKA and IKKB, activation of IKK and subsequent activation of NF-kappa-B. Post-translationally, undergoes both 'Lys-48'-linked and 'Lys-63'-linked polyubiquitination. Polyubiquitinated via 'Lys-63'-linked ubiquitin in response to TNF signaling; this requires prior phosphorylation at Thr-117. 'Lys-63'-linked polyubiquitination promotes TRAF2-mediated activation of NF-kappa-B. Can be polyubiquitinated at several Lys residues via 'Lys-48'-linked ubiquitin chains in response to TNF signaling, leading to proteasomal degradation. Autoubiquitinated, leading to its subsequent proteasomal degradation. Polyubiquitinated by BIRC2 and SIAH2, leading to its subsequent proteasomal degradation. Not ubiquitinated by BIRC3 or SIAH1. Deubiquitinated by CYLD, a protease that specifically cleaves 'Lys-63'-linked polyubiquitin chains. Ubiquination is inhibited by LRRC19; inhiits proteasomal degradation. Ubiquitinated at Lys-320 by the SCF(FBXL2) complex, leading to its degradation by the proteasome. Ubiquitinated by E3 ubiquitin-protein ligase complex containing FBXO7; leading to repression of NF-kappa-B signaling. Isoform 1 and isoform 2 are expressed in spleen, adipose tissues, skeletal muscles, thymus, testis, heart, lung, brain. Isoform 2 is very weakly expressed in heart, lung and brain.

It is found in the cytoplasm. It catalyses the reaction S-ubiquitinyl-[E2 ubiquitin-conjugating enzyme]-L-cysteine + [acceptor protein]-L-lysine = [E2 ubiquitin-conjugating enzyme]-L-cysteine + N(6)-ubiquitinyl-[acceptor protein]-L-lysine.. It functions in the pathway protein modification; protein ubiquitination. Has very low E3 ubiquitin ligase activity in the absence of sphingosine-1-phosphate. E3 ubiquitin ligase activity is strongly activated by cytoplasmic sphingosine-1-phosphate. Functionally, E3 ubiquitin-protein ligase that regulates activation of NF-kappa-B and JNK and plays a central role in the regulation of cell survival and apoptosis. Catalyzes 'Lys-63'-linked ubiquitination of target proteins, such as BIRC3, IKBKE, MLST8, RIPK1 and TICAM1. Is an essential constituent of several E3 ubiquitin-protein ligase complexes, where it promotes the ubiquitination of target proteins by bringing them into contact with other E3 ubiquitin ligases. Regulates BIRC2 and BIRC3 protein levels by inhibiting their autoubiquitination and subsequent degradation; this does not depend on the TRAF2 RING-type zinc finger domain. Plays a role in mediating activation of NF-kappa-B by EIF2AK2/PKR. In complex with BIRC2 or BIRC3, promotes ubiquitination of IKBKE. Acts as a regulator of mTORC1 and mTORC2 assembly by mediating 'Lys-63'-linked ubiquitination of MLST8, thereby inhibiting formation of the mTORC2 complex, while facilitating assembly of the mTORC1 complex. Required for normal antibody isotype switching from IgM to IgG. This Mus musculus (Mouse) protein is TNF receptor-associated factor 2 (Traf2).